The sequence spans 246 residues: Ribonuclease PH (246 aa).

Phosphate-binding positions include Arg91 and 129 to 131 (GTR).

It belongs to the RNase PH family. As to quaternary structure, homohexameric ring arranged as a trimer of dimers.

The enzyme catalyses tRNA(n+1) + phosphate = tRNA(n) + a ribonucleoside 5'-diphosphate. Phosphorolytic 3'-5' exoribonuclease that plays an important role in tRNA 3'-end maturation. Removes nucleotide residues following the 3'-CCA terminus of tRNAs; can also add nucleotides to the ends of RNA molecules by using nucleoside diphosphates as substrates, but this may not be physiologically important. Probably plays a role in initiation of 16S rRNA degradation (leading to ribosome degradation) during starvation. The chain is Ribonuclease PH from Burkholderia vietnamiensis (strain G4 / LMG 22486) (Burkholderia cepacia (strain R1808)).